A 333-amino-acid polypeptide reads, in one-letter code: Glyceraldehyde-3-phosphate dehydrogenase (333 aa).

NAD(+)-binding positions include 11–12 (RI), aspartate 32, and arginine 77. D-glyceraldehyde 3-phosphate is bound by residues 148 to 150 (SCT), threonine 179, 208 to 209 (TG), and arginine 231. The Nucleophile role is filled by cysteine 149. Residue asparagine 313 coordinates NAD(+).

It belongs to the glyceraldehyde-3-phosphate dehydrogenase family. In terms of assembly, homotetramer.

Its subcellular location is the cytoplasm. The catalysed reaction is D-glyceraldehyde 3-phosphate + phosphate + NAD(+) = (2R)-3-phospho-glyceroyl phosphate + NADH + H(+). It functions in the pathway carbohydrate degradation; glycolysis; pyruvate from D-glyceraldehyde 3-phosphate: step 1/5. This chain is Glyceraldehyde-3-phosphate dehydrogenase (Gapdh), found in Glossina morsitans morsitans (Savannah tsetse fly).